The sequence spans 30 residues: Cycloviolacin-O1 (30 aa).

Positions 1 to 30 form a cross-link, cyclopeptide (Gly-Asn); sequence GIPCAESCVYIPCTVTALLGCSCSNRVCYN. Intrachain disulfides connect cysteine 4-cysteine 21, cysteine 8-cysteine 23, and cysteine 13-cysteine 28.

In terms of processing, this is a cyclic peptide. As to expression, expressed in leaves, petals, petioles and roots but not in runners (at protein level).

Its function is as follows. Probably participates in a plant defense mechanism. The chain is Cycloviolacin-O1 from Viola odorata (Sweet violet).